Reading from the N-terminus, the 285-residue chain is MQKFLGVLTILVCVFGGYMWAGGKLGAIWQPAEFLIIIGAAAGSLIIGNPPHVLKEMRQQVPATIKGPTEEYEYYMELMALLNNLLETARSRGFKFLDSHIEAPEQSSIFLMYPLVSEDHRLISFITDNLRLMAMGQMSPHELEGLLEQEIEAIQNELLLPSRSLQRTAEALPGFGILAAVGGIIITMQAIDGSIALIGYHVAAALVGTFIGIFGCYCGLDPLSNAMAQRVKRNMTAFECVRATLVAYVAKKPTLLAIDAGRKHIQLDIKPTFNQMEKWLAEQEG.

Transmembrane regions (helical) follow at residues 4–23 (FLGV…WAGG), 34–51 (FLII…GNPP), 171–191 (ALPG…MQAI), and 201–222 (HVAA…GLDP). Residues 223–285 (LSNAMAQRVK…MEKWLAEQEG (63 aa)) are Cytoplasmic-facing.

This sequence belongs to the MotA family.

The protein localises to the cell inner membrane. Functionally, required for rotation of the flagellar motor. Probable transmembrane proton channel. The chain is Chemotaxis protein LafT (lafT) from Vibrio parahaemolyticus serotype O3:K6 (strain RIMD 2210633).